A 482-amino-acid chain; its full sequence is C3a anaphylatoxin chemotactic receptor (482 aa).

Topologically, residues 1-23 are extracellular; that stretch reads MASFSAETNSTDLLSQPWNEPPV. N-linked (GlcNAc...) asparagine glycosylation occurs at Asn9. The helical transmembrane segment at 24–46 threads the bilayer; sequence ILSMVILSLTFLLGLPGNGLVLW. Topologically, residues 47–57 are cytoplasmic; sequence VAGLKMQRTVN. Residues 58 to 80 traverse the membrane as a helical segment; the sequence is TVWFLHLTLADLLCCLSLPFSLA. Over 81-96 the chain is Extracellular; that stretch reads HLALQGQWPYGRFLCE. Residues Cys95 and Cys172 are joined by a disulfide bond. Residues 97–118 traverse the membrane as a helical segment; it reads LIPSIIVLNMFASVFLLTAISL. Over 119-139 the chain is Cytoplasmic; that stretch reads DRCLVVFKPIWCQNHRNVGTA. Residues 140–160 form a helical membrane-spanning segment; that stretch reads CSICGCIWVVAFVMCIPVFVY. Residues 161-340 lie on the Extracellular side of the membrane; sequence REIFTADNHN…TPLVAITITR (180 aa). 2 positions are modified to sulfotyrosine: Tyr174 and Tyr184. A glycan (N-linked (GlcNAc...) asparagine) is linked at Asn194. Tyr318 is modified (sulfotyrosine). The helical transmembrane segment at 341 to 360 threads the bilayer; it reads LVVGFLLPSVIMIACYSFIV. The Cytoplasmic portion of the chain corresponds to 361–377; that stretch reads FRMQRGRFAKSQSKTFR. Residues 378–400 form a helical membrane-spanning segment; that stretch reads VAVVVVAVFLVCWTPYHIFGVLS. Residues 401-417 are Extracellular-facing; sequence LLIDPESPLGKTLMSWD. The helical transmembrane segment at 418–438 threads the bilayer; the sequence is HVSIALASANSCFNPFLYALL. Over 439–482 the chain is Cytoplasmic; that stretch reads GKDFRKKARQSIQGILEAAFSEELTRSTHCNSNNVFSERNSTTV. Ser459 is subject to Phosphoserine. Thr463 is modified (phosphothreonine).

It belongs to the G-protein coupled receptor 1 family. As to quaternary structure, interacts with VGF-derived peptide TLQP-21. Post-translationally, among the sulfation sites Tyr-174 is essential for binding of C3a anaphylatoxin.

The protein resides in the cell membrane. In terms of biological role, receptor for the chemotactic and inflammatory peptide anaphylatoxin C3a. This receptor stimulates chemotaxis, granule enzyme release and superoxide anion production. This is C3a anaphylatoxin chemotactic receptor (C3AR1) from Pongo abelii (Sumatran orangutan).